We begin with the raw amino-acid sequence, 363 residues long: Dioxygenase sphC (363 aa).

The Fe cation site is built by histidine 183, aspartate 185, and histidine 259.

The protein belongs to the PhyH family. As to quaternary structure, homodimer. The cofactor is Fe cation.

The enzyme catalyses sphingofungin B1 + 2-oxoglutarate + O2 = sphingofungin B + succinate + CO2. It participates in secondary metabolite biosynthesis. Dioxygenase; part of the gene cluster that mediates the biosynthesis of sphingofungins, bioactive molecules acting as sphingolipid inhibitors via inhibiting serine palmitoyl transferase (SPT). Within the pathway, sphC catalyzes the hydrolxylation at C-4 to convert sphingofungin B1 into sphingofungin B as well as presphingofungin into sphingofungin B2. Sphingofungin biosynthesis starts with the PKS sphB that produces an C18 polyketide precursor 3-hydroxyoctadeca-4,10-dienoyl-ACP containing one delta-6 desaturation and one delta-12 desaturation. The aminoacyl transferase sphA uses the sphB product to produce 3-keto-presphingofungin by adding an aminomalonate molecule. SphF then reduces the C-3 ketone of 3-keto-presphingofungin which leads to presphingofungin. The cytochrome P450 monooxygenase sphH converts presphingofungin into sphingofungin B1 which is further converted to sphingofungin B by the dioxygenase sphC. SphC is also able to convert presphingofungin into sphingofungin B2. The acetyltransferase sphE acetylates sphingofungin B to produce sphingofungin C, but can also convert sphingofungin B1 into sphingofungin C1 and sphingofungin B2 into sphingofungin C2. Finally, sphingofungin C can be spontaneously converted into sphingofungin D. This Aspergillus fumigatus (strain CBS 144.89 / FGSC A1163 / CEA10) (Neosartorya fumigata) protein is Dioxygenase sphC.